The chain runs to 250 residues: Uracil-DNA glycosylase (250 aa).

The active-site Proton acceptor is aspartate 91.

This sequence belongs to the uracil-DNA glycosylase (UDG) superfamily. UNG family.

The protein resides in the host nucleus. The enzyme catalyses Hydrolyzes single-stranded DNA or mismatched double-stranded DNA and polynucleotides, releasing free uracil.. In terms of biological role, excises uracil residues from the DNA which can arise as a result of misincorporation of dUMP residues by DNA polymerase or due to deamination of cytosine. Its function is as follows. Excises uracil residues from the DNA which can arise as a result of misincorporation of dUMP residues by DNA polymerase or deamination of cytosines. Therefore may reduce deleterious uracil incorporation into the viral genome, particularly in terminally differentiated cells which lack DNA repair enzymes. The protein is Uracil-DNA glycosylase (UL114) of Homo sapiens (Human).